The primary structure comprises 232 residues: DNA damage-inducible transcript 4 protein (232 aa).

Residues 1–71 form a disordered region; sequence MPSLWDRFSS…SGFGPEEDTA (71 aa). Over residues 9–22 the composition is skewed to low complexity; sequence SSSSTSSSPSSLPR. At Ser-19 the chain carries Phosphoserine. A phosphothreonine mark is found at Thr-23 and Thr-25. Ser-121 is subject to Phosphoserine.

It belongs to the DDIT4 family. As to quaternary structure, monomer. Interacts with BTRC. Identified in a complex with CUL4A, DDB1 and BTRC. Interacts with TXNIP; this inhibits the proteasomal degradation of DDIT4. Post-translationally, phosphorylated by GSK3B; this promotes proteasomal degradation. Polyubiquitinated by a DCX (DDB1-CUL4A-RBX1) E3 ubiquitin-protein ligase complex with BTRC as substrate-recognition component, leading to its proteasomal degradation. Broadly expressed, with lowest levels in brain, skeletal muscle and intestine. Up-regulated in substantia nigra neurons from Parkinson disease patients (at protein level).

Its subcellular location is the mitochondrion. The protein localises to the cytoplasm. The protein resides in the cytosol. Functionally, regulates cell growth, proliferation and survival via inhibition of the activity of the mammalian target of rapamycin complex 1 (mTORC1). Inhibition of mTORC1 is mediated by a pathway that involves DDIT4/REDD1, AKT1, the TSC1-TSC2 complex and the GTPase RHEB. Plays an important role in responses to cellular energy levels and cellular stress, including responses to hypoxia and DNA damage. Regulates p53/TP53-mediated apoptosis in response to DNA damage via its effect on mTORC1 activity. Its role in the response to hypoxia depends on the cell type; it mediates mTORC1 inhibition in fibroblasts and thymocytes, but not in hepatocytes. Required for mTORC1-mediated defense against viral protein synthesis and virus replication. Inhibits neuronal differentiation and neurite outgrowth mediated by NGF via its effect on mTORC1 activity. Required for normal neuron migration during embryonic brain development. Plays a role in neuronal cell death. This is DNA damage-inducible transcript 4 protein (DDIT4) from Homo sapiens (Human).